The chain runs to 187 residues: UPF0301 protein YPTS_3341 (187 aa).

This sequence belongs to the UPF0301 (AlgH) family.

The sequence is that of UPF0301 protein YPTS_3341 from Yersinia pseudotuberculosis serotype IB (strain PB1/+).